The chain runs to 62 residues: Short neurotoxin B (62 aa).

Residues 1 to 16 are compositionally biased toward polar residues; sequence RRCFNHPSSQPQTNKS. The interval 1–21 is disordered; it reads RRCFNHPSSQPQTNKSCPPGE. 4 cysteine pairs are disulfide-bonded: Cys3–Cys24, Cys17–Cys41, Cys43–Cys54, and Cys55–Cys60.

This sequence belongs to the three-finger toxin family. Short-chain subfamily. Type I alpha-neurotoxin sub-subfamily. Expressed by the venom gland.

It localises to the secreted. Its function is as follows. Binds to muscle nicotinic acetylcholine receptor (nAChR) and inhibit acetylcholine from binding to the receptor, thereby impairing neuromuscular transmission. In Laticauda crockeri (Crocker's sea snake), this protein is Short neurotoxin B.